Consider the following 214-residue polypeptide: Thiamine import ATP-binding protein ThiQ (214 aa).

The ABC transporter domain maps to isoleucine 2–isoleucine 212. Glycine 31 to serine 38 is an ATP binding site.

This sequence belongs to the ABC transporter superfamily. Thiamine importer (TC 3.A.1.19.1) family. As to quaternary structure, the complex is composed of two ATP-binding proteins (ThiQ), two transmembrane proteins (ThiP) and a solute-binding protein (ThiB).

It is found in the cell inner membrane. The enzyme catalyses thiamine(out) + ATP + H2O = thiamine(in) + ADP + phosphate + H(+). In terms of biological role, part of the ABC transporter complex ThiBPQ involved in thiamine import. Responsible for energy coupling to the transport system. This Histophilus somni (strain 129Pt) (Haemophilus somnus) protein is Thiamine import ATP-binding protein ThiQ.